The sequence spans 473 residues: MAQHDFAPAWLNFPTPPSSTKSSLNFEKHSENFAWTENRYDVNRRRHNSSDGFDSAIGRPNGGNFGRKEKNGWRTHGRNGTENINHRGGYHGGSSRSRSSIFHSGKSQGLHENNIPDNETGRKEDKRERKQFEAEDFPSLNPEYEREPNHNKSLAAGVWEYPPNPKSRAPRMLVIKKGNTKDLQLSGFPVVGNLPSQPVKNGTGPSVYKGLVPKPAAPPTKPTQWKSQTKENKVGTSFPHESTFGVGNFNAFKSTAKNFSPSTNSVKECNRSNSSSPVDKLNQQPRLTKLTRMRTDKKSEFLKALKRDRVEEEHEDESRAGSEKDDDSFNLHNSNSTHQERDINRNFDENEIPQENGNASVISQQIIRSSTFPQTDVLSSSLEAEHRLLKEMGWQEDSENDETCAPITEDEMREFQVISEQLQKNGLRKNGILKNGLICDFKFGPWKNSTFKPTTENDDTETSSSDTSDDDDV.

Disordered regions lie at residues 1–25, 45–169, and 191–342; these read MAQHDFAPAWLNFPTPPSSTKSSLN, RRHN…KSRA, and VGNL…QERD. A Phosphoserine modification is found at S49. R87 is subject to Omega-N-methylarginine. The span at 93 to 107 shows a compositional bias: low complexity; that stretch reads GSSRSRSSIFHSGKS. Over residues 119-133 the composition is skewed to basic and acidic residues; that stretch reads ETGRKEDKRERKQFE. Composition is skewed to polar residues over residues 194 to 204 and 251 to 286; these read LPSQPVKNGTG and AFKSTAKNFSPSTNSVKECNRSNSSSPVDKLNQQPR. Residues S274, S276, S322, and S381 each carry the phosphoserine modification. The segment covering 293-329 has biased composition (basic and acidic residues); sequence MRTDKKSEFLKALKRDRVEEEHEDESRAGSEKDDDSF. A disordered region spans residues 444–473; that stretch reads GPWKNSTFKPTTENDDTETSSSDTSDDDDV. Over residues 456–473 the composition is skewed to acidic residues; the sequence is ENDDTETSSSDTSDDDDV.

It belongs to the vasculin family. As to quaternary structure, interacts with GTF2B, GTF2F2, RNA polymerase II and TBP.

The protein localises to the nucleus. Its function is as follows. Functions as a GC-rich promoter-specific transactivating transcription factor. This Pongo abelii (Sumatran orangutan) protein is Vasculin (GPBP1).